Here is a 1016-residue protein sequence, read N- to C-terminus: Primary septum glucan endo-1,3-beta-D-glucosidase (1016 aa).

A signal peptide spans M1–C20. The N-linked (GlcNAc...) asparagine glycan is linked to N37. Positions T45–P272 are beta-sandwich subdomain. One can recognise a GH81 domain in the interval T45–D741. An alpha/beta subdomain region spans residues L273 to A364. Residues G379–D741 are (alpha/beta)6 barrel subdomain. D492 is an active-site residue. Residues H496, D567, E569, E573, and Y650 each contribute to the (1,3-beta-D-glucosyl)n site. Catalysis depends on residues E569 and E573. Positions S748–A1016 are required for catalytic activity against insoluble beta-glucan and to restrict localization of the enzyme to the cell septum. Positions S844 to T872 are disordered.

This sequence belongs to the glycosyl hydrolase 81 family.

It is found in the cell septum. The enzyme catalyses Hydrolysis of (1-&gt;3)-beta-D-glucosidic linkages in (1-&gt;3)-beta-D-glucans.. Cleaves internal linkages in 1,3-beta-glucan. Has a role in cell separation where it is required for the degradation of the primary septum after completion of cytokinesis. This chain is Primary septum glucan endo-1,3-beta-D-glucosidase, found in Schizosaccharomyces pombe (strain 972 / ATCC 24843) (Fission yeast).